Consider the following 340-residue polypeptide: Anthranilate phosphoribosyltransferase (340 aa).

Residues G80, G83–D84, T88, N90–T93, K108–S116, and S120 contribute to the 5-phospho-alpha-D-ribose 1-diphosphate site. G80 serves as a coordination point for anthranilate. A Mg(2+)-binding site is contributed by S92. N111 lines the anthranilate pocket. R166 lines the anthranilate pocket. 2 residues coordinate Mg(2+): D225 and E226.

This sequence belongs to the anthranilate phosphoribosyltransferase family. As to quaternary structure, homodimer. Mg(2+) is required as a cofactor.

The catalysed reaction is N-(5-phospho-beta-D-ribosyl)anthranilate + diphosphate = 5-phospho-alpha-D-ribose 1-diphosphate + anthranilate. Its pathway is amino-acid biosynthesis; L-tryptophan biosynthesis; L-tryptophan from chorismate: step 2/5. Catalyzes the transfer of the phosphoribosyl group of 5-phosphorylribose-1-pyrophosphate (PRPP) to anthranilate to yield N-(5'-phosphoribosyl)-anthranilate (PRA). This chain is Anthranilate phosphoribosyltransferase, found in Chloroflexus aggregans (strain MD-66 / DSM 9485).